The chain runs to 379 residues: Odorant receptor 33b (379 aa).

Residues 1 to 37 (MDLKPRVIRSEDIYRTYWLYWHLLGLESNFFLNRLLD) are Cytoplasmic-facing. The helical transmembrane segment at 38–58 (LVITIFVTIWYPIHLILGLFM) threads the bilayer. The Extracellular segment spans residues 59–64 (ERSLGD). A helical membrane pass occupies residues 65–85 (VCKGLPITAACFFASFKFICF). Topologically, residues 86-129 (RFKLSEIKEIEILFKELDQRALSREECEFFNQNTRREANFIWKS) are cytoplasmic. Residues 130-150 (FIVAYGLSNISAIASVLFGGG) traverse the membrane as a helical segment. The Extracellular portion of the chain corresponds to 151-165 (HKLLYPAWFPYDVQA). A helical transmembrane segment spans residues 166 to 186 (TELIFWLSVTYQIAGVSLAIL). At 187 to 256 (QNLANDSYPP…LLRSTMNISQ (70 aa)) the chain is on the cytoplasmic side. Residues 257–277 (LGQFISSGVNISITLVNILFF) traverse the membrane as a helical segment. The Extracellular portion of the chain corresponds to 278–281 (ADNN). A helical transmembrane segment spans residues 282–302 (FAITYYGVYFLSMVLELFPCC). At 303–355 (YYGTLISVEMNQLTYAIYSSNWMSMNRSYSRILLIFMQLTLAEVQIKAGGMIG) the chain is on the cytoplasmic side. Residues 356–376 (IGMNAFFATVRLAYSFFTLAM) form a helical membrane-spanning segment. The Extracellular segment spans residues 377–379 (SLR).

Belongs to the insect chemoreceptor superfamily. Heteromeric odorant receptor channel (TC 1.A.69) family. Or2a subfamily. As to quaternary structure, interacts with Orco. Complexes exist early in the endomembrane system in olfactory sensory neurons (OSNs), coupling these complexes to the conserved ciliary trafficking pathway. Expressed in 15 cells in the antenna but not the maxillary palp.

Its subcellular location is the cell membrane. In terms of biological role, odorant receptor which mediates acceptance or avoidance behavior, depending on its substrates. The odorant receptor repertoire encodes a large collection of odor stimuli that vary widely in identity, intensity, and duration. May form a complex with Orco to form odorant-sensing units, providing sensitive and prolonged odorant signaling and calcium permeability. Involved in the behavioral responses to pentyl acetate and pyrazines. The chain is Odorant receptor 33b (Or33b) from Drosophila melanogaster (Fruit fly).